A 148-amino-acid chain; its full sequence is uncharacterized protein (148 aa).

This is an uncharacterized protein from Saccharomyces cerevisiae (strain ATCC 204508 / S288c) (Baker's yeast).